Reading from the N-terminus, the 430-residue chain is Serine--tRNA ligase (430 aa).

Residue 238–240 (TAE) coordinates L-serine. Residue 269–271 (RRE) participates in ATP binding. Residue Glu292 coordinates L-serine. Position 356–359 (356–359 (EISS)) interacts with ATP. Ser392 contributes to the L-serine binding site.

The protein belongs to the class-II aminoacyl-tRNA synthetase family. Type-1 seryl-tRNA synthetase subfamily. Homodimer. The tRNA molecule binds across the dimer.

It localises to the cytoplasm. It catalyses the reaction tRNA(Ser) + L-serine + ATP = L-seryl-tRNA(Ser) + AMP + diphosphate + H(+). The enzyme catalyses tRNA(Sec) + L-serine + ATP = L-seryl-tRNA(Sec) + AMP + diphosphate + H(+). It functions in the pathway aminoacyl-tRNA biosynthesis; selenocysteinyl-tRNA(Sec) biosynthesis; L-seryl-tRNA(Sec) from L-serine and tRNA(Sec): step 1/1. In terms of biological role, catalyzes the attachment of serine to tRNA(Ser). Is also able to aminoacylate tRNA(Sec) with serine, to form the misacylated tRNA L-seryl-tRNA(Sec), which will be further converted into selenocysteinyl-tRNA(Sec). In Synechocystis sp. (strain ATCC 27184 / PCC 6803 / Kazusa), this protein is Serine--tRNA ligase.